Here is a 169-residue protein sequence, read N- to C-terminus: Neudesin (169 aa).

The first 28 residues, 1–28, serve as a signal peptide directing secretion; it reads MAGPAPGRRLVALALIVALAVGLPTAGA. One can recognise a Cytochrome b5 heme-binding domain in the interval 41 to 126; it reads VRLFTEEELA…EELESLDDVF (86 aa). Residue Lys133 is modified to N6-acetyllysine. The tract at residues 148 to 169 is disordered; that stretch reads DGSPNLDFKPEDQPHFDIKDEF. A compositionally biased stretch (basic and acidic residues) spans 155–169; it reads FKPEDQPHFDIKDEF.

The protein belongs to the cytochrome b5 family. MAPR subfamily. Interacts with PINK1 and PARK7.

It localises to the secreted. The protein resides in the extracellular space. It is found in the mitochondrion. The protein localises to the endoplasmic reticulum. Functionally, acts as a neurotrophic factor in postnatal mature neurons enhancing neuronal survival. Promotes cell proliferation and neurogenesis in undifferentiated neural progenitor cells at the embryonic stage and inhibits differentiation of astrocytes. Its neurotrophic activity is exerted via MAPK1/ERK2, MAPK3/ERK1 and AKT1/AKT pathways. Neurotrophic activity is enhanced by binding to heme. Also acts as an anorexigenic neurotrophic factor that contributes to energy balance. The sequence is that of Neudesin (NENF) from Bos taurus (Bovine).